The primary structure comprises 517 residues: Beta-galactoside alpha-2,6-sialyltransferase 2 (517 aa).

The Cytoplasmic segment spans residues 1-10; the sequence is MKPNLKQWKQ. A helical; Signal-anchor for type II membrane protein membrane pass occupies residues 11-31; it reads FMLFGICAWGLLFLVIFVYFT. Topologically, residues 32–517 are lumenal; sequence DSNSVEPVPS…IHCPIKDHIT (486 aa). 3 N-linked (GlcNAc...) asparagine glycosylation sites follow: Asn201, Asn298, and Asn328. 3 disulfides stabilise this stretch: Cys244–Cys510, Cys287–Cys439, and Cys457–Cys468.

It belongs to the glycosyltransferase 29 family.

The protein localises to the golgi apparatus. It is found in the golgi stack membrane. The enzyme catalyses a beta-D-galactoside + CMP-N-acetyl-beta-neuraminate = an N-acetyl-alpha-neuraminyl-(2-&gt;6)-beta-D-galactosyl derivative + CMP + H(+). In terms of biological role, transfers sialic acid from the donor of substrate CMP-sialic acid to galactose containing acceptor substrates. The protein is Beta-galactoside alpha-2,6-sialyltransferase 2 (st6gal2) of Xenopus tropicalis (Western clawed frog).